Consider the following 651-residue polypeptide: Acetyl-coenzyme A synthetase (651 aa).

CoA is bound by residues 189–192, Thr311, and Asn335; that span reads RGGK. Residues 387-389, 411-416, Asp500, and Arg515 each bind ATP; these read GEP and DTWWQT. Residue Ser523 coordinates CoA. Arg526 contributes to the ATP binding site. 3 residues coordinate Mg(2+): Val537, His539, and Val542. Arg586 contributes to the CoA binding site. Lys611 carries the post-translational modification N6-acetyllysine.

This sequence belongs to the ATP-dependent AMP-binding enzyme family. The cofactor is Mg(2+). Post-translationally, acetylated. Deacetylation by the SIR2-homolog deacetylase activates the enzyme.

The catalysed reaction is acetate + ATP + CoA = acetyl-CoA + AMP + diphosphate. Its function is as follows. Catalyzes the conversion of acetate into acetyl-CoA (AcCoA), an essential intermediate at the junction of anabolic and catabolic pathways. AcsA undergoes a two-step reaction. In the first half reaction, AcsA combines acetate with ATP to form acetyl-adenylate (AcAMP) intermediate. In the second half reaction, it can then transfer the acetyl group from AcAMP to the sulfhydryl group of CoA, forming the product AcCoA. The chain is Acetyl-coenzyme A synthetase from Brucella anthropi (strain ATCC 49188 / DSM 6882 / CCUG 24695 / JCM 21032 / LMG 3331 / NBRC 15819 / NCTC 12168 / Alc 37) (Ochrobactrum anthropi).